The primary structure comprises 336 residues: tRNA pseudouridine synthase D (336 aa).

Aspartate 84 serves as the catalytic Nucleophile. In terms of domain architecture, TRUD spans 164–298; the sequence is GVPNYFGEQR…TPSYRWLVGD (135 aa).

It belongs to the pseudouridine synthase TruD family.

It carries out the reaction uridine(13) in tRNA = pseudouridine(13) in tRNA. Responsible for synthesis of pseudouridine from uracil-13 in transfer RNAs. The chain is tRNA pseudouridine synthase D from Cellvibrio japonicus (strain Ueda107) (Pseudomonas fluorescens subsp. cellulosa).